The chain runs to 274 residues: (R)-stereoselective amidase (274 aa).

Residues 1-234 (MKIELVQLAG…EVRHVVELDL (234 aa)) enclose the CN hydrolase domain. The active-site Proton acceptor is the E40. K108 functions as the Proton donor in the catalytic mechanism. C140 serves as the catalytic Nucleophile.

Monomer.

The catalysed reaction is (R)-piperazine-2-carboxamide + H2O = (R)-piperazine-2-carboxylate + NH4(+). It catalyses the reaction beta-alaninamide + H2O = beta-alanine + NH4(+). Its activity is regulated as follows. Completely inhibited by p-chloromercuribenzoate, N-ethylmaleimide, MnSO(4), MnCl(2), CoCl(2), NiCl(2), CuSO(4), CuCl(2), ZnSO(4), ZnCl(2), AgNO(3), CdCl(2), HgCl(2) and PbCl(2). Partially inhibited by FeCl(3) and Fe(NH(4))(2)(SO(4))(2). Slightly enhanced by dithiothreitol. Unaffected by LiBr, H(2)BO(3), NaCl, MgSO(4), MgCl(2), AlCl(3), KCl, CaCl(2), CrCl(3), RbCl, Na(2)MoO(4), (NH(4))(6)Mo(7)O(24), CsCl and BaCl(2). Unaffected by the chelating agents o-phenanthroline, 8-hydroxyquinoline, enthylenediaminetetraacetic acid and alpha,alpha'-dipyridyl. Not inhibited by the carbonyl reagents hydroxylamine, phenylhydrazine, hydrazine, D,L-penicillamine and D-cycloserine. Not affected by the serine protease inhibitor phenylmethanesulfonyl fluoride, the serine/cysteine protease inhibitor leupeptine or the aspartic protease inhibitor pepstatin. Its function is as follows. Hydrolyzes (R)-piperazine-2-carboxamide and (R)-piperazine-2-tert-butylcarboxamide with strict R-stereoselectivity. Also active towards beta-alaninamide, piperidine-3-carboxmide, D-glutaminamide and slightly active towards L-glutaminamide and piperidine-4-carboxamide. This chain is (R)-stereoselective amidase, found in Pseudomonas sp.